Here is a 464-residue protein sequence, read N- to C-terminus: 3-isopropylmalate dehydratase large subunit (464 aa).

3 residues coordinate [4Fe-4S] cluster: C337, C397, and C400.

Belongs to the aconitase/IPM isomerase family. LeuC type 1 subfamily. In terms of assembly, heterodimer of LeuC and LeuD. The cofactor is [4Fe-4S] cluster.

The enzyme catalyses (2R,3S)-3-isopropylmalate = (2S)-2-isopropylmalate. Its pathway is amino-acid biosynthesis; L-leucine biosynthesis; L-leucine from 3-methyl-2-oxobutanoate: step 2/4. Functionally, catalyzes the isomerization between 2-isopropylmalate and 3-isopropylmalate, via the formation of 2-isopropylmaleate. The chain is 3-isopropylmalate dehydratase large subunit from Bacillus cereus (strain AH820).